Reading from the N-terminus, the 156-residue chain is ATP synthase subunit b (156 aa).

A helical membrane pass occupies residues 3 to 23 (ITLTIFAQALAFAGLIWIVAT).

The protein belongs to the ATPase B chain family. As to quaternary structure, F-type ATPases have 2 components, F(1) - the catalytic core - and F(0) - the membrane proton channel. F(1) has five subunits: alpha(3), beta(3), gamma(1), delta(1), epsilon(1). F(0) has three main subunits: a(1), b(2) and c(10-14). The alpha and beta chains form an alternating ring which encloses part of the gamma chain. F(1) is attached to F(0) by a central stalk formed by the gamma and epsilon chains, while a peripheral stalk is formed by the delta and b chains.

The protein localises to the cell inner membrane. In terms of biological role, f(1)F(0) ATP synthase produces ATP from ADP in the presence of a proton or sodium gradient. F-type ATPases consist of two structural domains, F(1) containing the extramembraneous catalytic core and F(0) containing the membrane proton channel, linked together by a central stalk and a peripheral stalk. During catalysis, ATP synthesis in the catalytic domain of F(1) is coupled via a rotary mechanism of the central stalk subunits to proton translocation. Component of the F(0) channel, it forms part of the peripheral stalk, linking F(1) to F(0). The sequence is that of ATP synthase subunit b from Xanthomonas campestris pv. campestris (strain 8004).